The sequence spans 152 residues: Aspartate carbamoyltransferase regulatory chain (152 aa).

Zn(2+) is bound by residues Cys-108, Cys-113, Cys-136, and Cys-139.

Belongs to the PyrI family. In terms of assembly, contains catalytic and regulatory chains. The cofactor is Zn(2+).

Functionally, involved in allosteric regulation of aspartate carbamoyltransferase. The sequence is that of Aspartate carbamoyltransferase regulatory chain from Pyrococcus furiosus (strain ATCC 43587 / DSM 3638 / JCM 8422 / Vc1).